A 452-amino-acid chain; its full sequence is Serine carboxypeptidase-like 26 (452 aa).

Residues 1 to 20 form the signal peptide; that stretch reads MARLLLLFFFFLILLHYASC. Asn-52 and Asn-138 each carry an N-linked (GlcNAc...) asparagine glycan. 3 disulfides stabilise this stretch: Cys-87–Cys-338, Cys-244–Cys-256, and Cys-280–Cys-306. Ser-180 is a catalytic residue. N-linked (GlcNAc...) asparagine glycosylation is present at Asn-327. Active-site residues include Asp-375 and His-427.

This sequence belongs to the peptidase S10 family. As to expression, ubiquitous.

The protein resides in the secreted. In terms of biological role, probable carboxypeptidase. In Arabidopsis thaliana (Mouse-ear cress), this protein is Serine carboxypeptidase-like 26 (SCPL26).